A 34-amino-acid polypeptide reads, in one-letter code: uncharacterized protein (34 aa).

Residues 10-30 (LIITSSFFAIAVVLVLSVLLI) form a helical membrane-spanning segment.

Its subcellular location is the membrane. This is an uncharacterized protein from Shigella flexneri.